The chain runs to 122 residues: Double-headed protease inhibitor, submandibular gland (122 aa).

Kazal-like domains lie at 10-70 and 71-121; these read GGRK…NCDI and ECTQ…QCES. 6 disulfides stabilise this stretch: cysteine 16–cysteine 50, cysteine 28–cysteine 47, cysteine 36–cysteine 68, cysteine 72–cysteine 101, cysteine 79–cysteine 98, and cysteine 87–cysteine 119.

The protein localises to the secreted. This inhibitor is composed of two homologous actively inhibiting halves: one which inhibits trypsin, the other which inhibits elastase. In Meles meles (Eurasian badger), this protein is Double-headed protease inhibitor, submandibular gland.